Consider the following 688-residue polypeptide: Potassium-transporting ATPase ATP-binding subunit (688 aa).

Helical transmembrane passes span 37-57 (FLVY…LVGI), 65-85 (ILGI…AEAI), 219-239 (IALQ…TVSL), and 262-282 (VALL…SIGI). Asp313 functions as the 4-aspartylphosphate intermediate in the catalytic mechanism. Residues Asp350, Glu354, 383–390 (FTAKTRMS), and Lys401 each bind ATP. 2 residues coordinate Mg(2+): Asp524 and Asp528. A run of 3 helical transmembrane segments spans residues 594-614 (FAII…LNIM), 622-642 (AIFS…PLAL), and 668-688 (IIVP…IGIV).

This sequence belongs to the cation transport ATPase (P-type) (TC 3.A.3) family. Type IA subfamily. The system is composed of three essential subunits: KdpA, KdpB and KdpC.

The protein resides in the cell membrane. The catalysed reaction is K(+)(out) + ATP + H2O = K(+)(in) + ADP + phosphate + H(+). In terms of biological role, part of the high-affinity ATP-driven potassium transport (or Kdp) system, which catalyzes the hydrolysis of ATP coupled with the electrogenic transport of potassium into the cytoplasm. This subunit is responsible for energy coupling to the transport system and for the release of the potassium ions to the cytoplasm. The polypeptide is Potassium-transporting ATPase ATP-binding subunit (Clostridium botulinum (strain Eklund 17B / Type B)).